The chain runs to 395 residues: Na(+)/H(+) antiporter NhaA (395 aa).

12 helical membrane-spanning segments follow: residues 18–38 (AGGI…NSPL), 64–84 (LLMW…GLEV), 100–120 (IFPA…YWLV), 129–149 (GGWA…LVLL), 160–180 (FLLA…ALFF), 182–202 (HDLS…LILL), 205–225 (FKVS…VSVL), 226–246 (KSGV…PLKG), 266–286 (FLIL…GLGM), 295–315 (LGVT…FSYL), 333–353 (IFAV…LASL), and 368–388 (LGIL…LFVT).

Belongs to the NhaA Na(+)/H(+) (TC 2.A.33) antiporter family.

The protein localises to the cell inner membrane. It carries out the reaction Na(+)(in) + 2 H(+)(out) = Na(+)(out) + 2 H(+)(in). Functionally, na(+)/H(+) antiporter that extrudes sodium in exchange for external protons. This Histophilus somni (strain 129Pt) (Haemophilus somnus) protein is Na(+)/H(+) antiporter NhaA.